A 182-amino-acid polypeptide reads, in one-letter code: Doublesex- and mab-3-related transcription factor C1 (182 aa).

Threonine 15 bears the Phosphoserine mark. Positions 26 to 39 are enriched in polar residues; it reads AQVDTATQEESSQG. 2 disordered regions span residues 26-48 and 136-174; these read AQVD…QHPE and QTRH…PSGH.

The protein belongs to the DMRT family. In terms of tissue distribution, expressed in Sertoli cells in male testis.

The protein is Doublesex- and mab-3-related transcription factor C1 (Dmrtc1) of Mus musculus (Mouse).